We begin with the raw amino-acid sequence, 371 residues long: Cytochrome b (371 aa).

4 consecutive transmembrane segments (helical) span residues 25-45 (FGSM…FLAI), 69-90 (WTMQ…YTHI), 105-125 (WLSG…GYVL), and 170-190 (FFAL…VHII). The heme b site is built by His-75 and His-89. Heme b contacts are provided by His-174 and His-188. His-193 is an a ubiquinone binding site. Helical transmembrane passes span 218–238 (YKDM…MSFS), 280–300 (LGGT…PFTH), 312–332 (FTQL…WTAT), and 339–358 (FILI…IINP).

It belongs to the cytochrome b family. As to quaternary structure, the cytochrome bc1 complex contains 3 respiratory subunits (MT-CYB, CYC1 and UQCRFS1), 2 core proteins (UQCRC1 and UQCRC2) and probably 6 low-molecular weight proteins. Heme b serves as cofactor.

The protein resides in the mitochondrion inner membrane. Its function is as follows. Component of the ubiquinol-cytochrome c reductase complex (complex III or cytochrome b-c1 complex) that is part of the mitochondrial respiratory chain. The b-c1 complex mediates electron transfer from ubiquinol to cytochrome c. Contributes to the generation of a proton gradient across the mitochondrial membrane that is then used for ATP synthesis. The chain is Cytochrome b (MT-CYB) from Elapognathus coronatus (Western crowned snake).